Consider the following 327-residue polypeptide: o-succinylbenzoate synthase (327 aa).

Lys-110 serves as the catalytic Proton donor. Mg(2+) is bound by residues Asp-138, Glu-165, and Asp-188. Lys-212 serves as the catalytic Proton acceptor.

It belongs to the mandelate racemase/muconate lactonizing enzyme family. MenC type 1 subfamily. A divalent metal cation is required as a cofactor.

The catalysed reaction is (1R,6R)-6-hydroxy-2-succinyl-cyclohexa-2,4-diene-1-carboxylate = 2-succinylbenzoate + H2O. The protein operates within quinol/quinone metabolism; 1,4-dihydroxy-2-naphthoate biosynthesis; 1,4-dihydroxy-2-naphthoate from chorismate: step 4/7. It participates in quinol/quinone metabolism; menaquinone biosynthesis. In terms of biological role, converts 2-succinyl-6-hydroxy-2,4-cyclohexadiene-1-carboxylate (SHCHC) to 2-succinylbenzoate (OSB). In Mycobacterium marinum (strain ATCC BAA-535 / M), this protein is o-succinylbenzoate synthase.